Here is a 323-residue protein sequence, read N- to C-terminus: tRNA dimethylallyltransferase (323 aa).

12 to 19 (GPTAAGKT) contributes to the ATP binding site. 14–19 (TAAGKT) contacts substrate. Interaction with substrate tRNA stretches follow at residues 37–40 (DSAL) and 161–165 (QRLIR).

The protein belongs to the IPP transferase family. As to quaternary structure, monomer. It depends on Mg(2+) as a cofactor.

The enzyme catalyses adenosine(37) in tRNA + dimethylallyl diphosphate = N(6)-dimethylallyladenosine(37) in tRNA + diphosphate. In terms of biological role, catalyzes the transfer of a dimethylallyl group onto the adenine at position 37 in tRNAs that read codons beginning with uridine, leading to the formation of N6-(dimethylallyl)adenosine (i(6)A). This is tRNA dimethylallyltransferase from Pseudomonas savastanoi pv. phaseolicola (strain 1448A / Race 6) (Pseudomonas syringae pv. phaseolicola (strain 1448A / Race 6)).